The chain runs to 137 residues: Basic phospholipase A2 PeBP(R)-I/II (137 aa).

The N-terminal stretch at 1–16 (MRTLWIMAVLLLGVEG) is a signal peptide. 7 cysteine pairs are disulfide-bonded: C42-C131, C44-C60, C59-C111, C65-C137, C66-C104, C73-C97, and C91-C102. Residue H63 is part of the active site. D105 is a catalytic residue.

The protein belongs to the phospholipase A2 family. Group II subfamily. R49 sub-subfamily. As to expression, expressed by the venom gland.

It localises to the secreted. It catalyses the reaction a 1,2-diacyl-sn-glycero-3-phosphocholine + H2O = a 1-acyl-sn-glycero-3-phosphocholine + a fatty acid + H(+). In terms of biological role, snake venom phospholipases A2 that have myotoxic, and edema-inducing activity, as well as extremely weak lipolytic activity. PLA2 catalyzes the calcium-dependent hydrolysis of the 2-acyl groups in 3-sn-phosphoglycerides. The sequence is that of Basic phospholipase A2 PeBP(R)-I/II from Protobothrops elegans (Elegant pitviper).